The sequence spans 3477 residues: Abnormal spindle-like microcephaly-associated protein (3477 aa).

The segment at 1-30 is disordered; the sequence is MANRRVGRGCWEVSPTERRPPAGLRGPAAE. Phosphoserine occurs at positions 280, 283, 367, and 392. The interval 308–409 is sufficient for interaction with KATNA1:KATNB1; that stretch reads ITQSQIHFLS…NMAYMCTSQQ (102 aa). Positions 415–424 are enriched in polar residues; it reads LSNENSQVPQ. Disordered stretches follow at residues 415 to 443 and 559 to 581; these read LSNE…ECQG and KNEV…DGSM. Ser-425 is modified (phosphoserine). Positions 560 to 570 are enriched in polar residues; sequence NEVTPSSTTAS. Ser-605 is modified (phosphoserine). One can recognise a Calponin-homology (CH) 1 domain in the interval 920–1056; it reads KASKEILLAF…LLWKIAFAFQ (137 aa). Residues 1057 to 1078 adopt a coiled-coil conformation; that stretch reads VDISLNLDQLKEEIAFLKHTKS. Ser-1103 bears the Phosphoserine mark. One can recognise a Calponin-homology (CH) 2 domain in the interval 1110 to 1261; that stretch reads SENIKLLMDW…YLSFLCARLL (152 aa). 39 IQ domains span residues 1347–1378, 1393–1422, 1582–1613, 1632–1661, 1655–1684, 1728–1757, 1751–1782, 1801–1830, 1824–1853, 1874–1903, 1897–1928, 1947–1978, 1970–2001, 2020–2049, 2043–2074, 2093–2124, 2116–2147, 2166–2197, 2189–2218, 2239–2270, 2262–2293, 2311–2342, 2334–2365, 2384–2415, 2407–2438, 2457–2488, 2530–2561, 2624–2653, 2665–2696, 2688–2719, 2738–2767, 2859–2890, 2909–2938, 2932–2963, 2954–2985, 3029–3060, 3079–3110, 3181–3210, and 3204–3235; these read QNKA…IILQ, YLWA…MLKS, LKKT…VIIQ, TRSA…SVIK, ILTS…ATIK, MRES…AVIS, QRKA…IVIQ, VKKA…AALK, QSIA…SIIK, TKAA…AALK, EHQA…LVIQ, LRHA…IIIQ, QHKC…LLIQ, TKAA…AAVT, CNKA…IIIQ, LKKT…TFIK, MHRA…IVIQ, ILKA…TLIQ, MQTA…ITKT, LRHS…TLIQ, MHIA…ILIQ, VQNA…TFIQ, MHRA…VVIQ, QRHS…TLIQ, MHSS…IFVQ, LRKA…VLIQ, QWHS…IVIQ, QHQA…TVVS, RTQA…TLIQ, VQKS…EKMA, QKRA…VVLQ, IRSS…STIK, IKNS…KIQA, KVKA…KIIQ, RHRA…LIIQ, FKKS…RLLH, RNRA…GIIK, and FTSG…IRLS.

In terms of assembly, interacts with KATNA1 and KATNB1; katanin complex formation KATNA1:KATNB1 is required for the association.

It is found in the cytoplasm. The protein resides in the cytoskeleton. Its subcellular location is the spindle. The protein localises to the nucleus. Functionally, involved in mitotic spindle regulation and coordination of mitotic processes. The function in regulating microtubule dynamics at spindle poles including spindle orientation, astral microtubule density and poleward microtubule flux seems to depend on the association with the katanin complex formed by KATNA1 and KATNB1. Enhances the microtubule lattice severing activity of KATNA1 by recruiting the katanin complex to microtubules. Can block microtubule minus-end growth and reversely this function can be enhanced by the katanin complex. May have a preferential role in regulating neurogenesis. This is Abnormal spindle-like microcephaly-associated protein (ASPM) from Homo sapiens (Human).